A 250-amino-acid polypeptide reads, in one-letter code: 5'-nucleotidase SurE (250 aa).

A divalent metal cation contacts are provided by Asp8, Asp9, Ser40, and Asn94.

Belongs to the SurE nucleotidase family. Requires a divalent metal cation as cofactor.

The protein resides in the cytoplasm. It catalyses the reaction a ribonucleoside 5'-phosphate + H2O = a ribonucleoside + phosphate. Its function is as follows. Nucleotidase that shows phosphatase activity on nucleoside 5'-monophosphates. This Wolbachia sp. subsp. Brugia malayi (strain TRS) protein is 5'-nucleotidase SurE.